A 240-amino-acid polypeptide reads, in one-letter code: Ribonuclease PH (240 aa).

Residues R87 and 125-127 (GTR) contribute to the phosphate site.

The protein belongs to the RNase PH family. Homohexameric ring arranged as a trimer of dimers.

It carries out the reaction tRNA(n+1) + phosphate = tRNA(n) + a ribonucleoside 5'-diphosphate. Its function is as follows. Phosphorolytic 3'-5' exoribonuclease that plays an important role in tRNA 3'-end maturation. Removes nucleotide residues following the 3'-CCA terminus of tRNAs; can also add nucleotides to the ends of RNA molecules by using nucleoside diphosphates as substrates, but this may not be physiologically important. Probably plays a role in initiation of 16S rRNA degradation (leading to ribosome degradation) during starvation. This Pseudomonas putida (strain GB-1) protein is Ribonuclease PH.